Consider the following 312-residue polypeptide: Malate dehydrogenase (312 aa).

Residues 7–13 and aspartate 34 contribute to the NAD(+) site; that span reads GAAGGIG. Substrate is bound by residues arginine 81 and arginine 87. NAD(+) contacts are provided by residues asparagine 94 and 117-119; that span reads ITN. The substrate site is built by asparagine 119 and arginine 153. Histidine 177 serves as the catalytic Proton acceptor. An NAD(+)-binding site is contributed by methionine 227.

The protein belongs to the LDH/MDH superfamily. MDH type 1 family. In terms of assembly, homodimer.

The catalysed reaction is (S)-malate + NAD(+) = oxaloacetate + NADH + H(+). Its function is as follows. Catalyzes the reversible oxidation of malate to oxaloacetate. The sequence is that of Malate dehydrogenase from Salmonella arizonae (strain ATCC BAA-731 / CDC346-86 / RSK2980).